The following is a 205-amino-acid chain: Large ribosomal subunit protein uL3 (205 aa).

The protein belongs to the universal ribosomal protein uL3 family. In terms of assembly, part of the 50S ribosomal subunit. Forms a cluster with proteins L14 and L19.

Its function is as follows. One of the primary rRNA binding proteins, it binds directly near the 3'-end of the 23S rRNA, where it nucleates assembly of the 50S subunit. The polypeptide is Large ribosomal subunit protein uL3 (Parabacteroides distasonis (strain ATCC 8503 / DSM 20701 / CIP 104284 / JCM 5825 / NCTC 11152)).